A 467-amino-acid polypeptide reads, in one-letter code: Glutamate--tRNA ligase 2 (467 aa).

Positions 18-28 match the 'HIGH' region motif; it reads PSPTGYLHVGG. The 'KMSKS' region motif lies at 238-242; the sequence is PLSKR. An ATP-binding site is contributed by Lys241.

The protein belongs to the class-I aminoacyl-tRNA synthetase family. Glutamate--tRNA ligase type 1 subfamily. In terms of assembly, monomer.

Its subcellular location is the cytoplasm. It catalyses the reaction tRNA(Glu) + L-glutamate + ATP = L-glutamyl-tRNA(Glu) + AMP + diphosphate. Its function is as follows. Catalyzes the attachment of glutamate to tRNA(Glu) in a two-step reaction: glutamate is first activated by ATP to form Glu-AMP and then transferred to the acceptor end of tRNA(Glu). This Fervidobacterium nodosum (strain ATCC 35602 / DSM 5306 / Rt17-B1) protein is Glutamate--tRNA ligase 2.